Reading from the N-terminus, the 451-residue chain is Chaperone SurA (451 aa).

The first 26 residues, 1 to 26 (MKKIIPTNLFKLISILFILTPFFAWS), serve as a signal peptide directing secretion. 2 consecutive PpiC domains span residues 179–280 (DVEY…QLQG) and 290–388 (KQYH…FLDG).

It localises to the periplasm. It catalyses the reaction [protein]-peptidylproline (omega=180) = [protein]-peptidylproline (omega=0). Chaperone involved in the correct folding and assembly of outer membrane proteins. Recognizes specific patterns of aromatic residues and the orientation of their side chains, which are found more frequently in integral outer membrane proteins. May act in both early periplasmic and late outer membrane-associated steps of protein maturation. The sequence is that of Chaperone SurA from Hydrogenovibrio crunogenus (strain DSM 25203 / XCL-2) (Thiomicrospira crunogena).